A 37-amino-acid chain; its full sequence is Large ribosomal subunit protein bL36 (37 aa).

Belongs to the bacterial ribosomal protein bL36 family.

The chain is Large ribosomal subunit protein bL36 from Staphylococcus saprophyticus subsp. saprophyticus (strain ATCC 15305 / DSM 20229 / NCIMB 8711 / NCTC 7292 / S-41).